The primary structure comprises 403 residues: Octaketide synthase 1 (403 aa).

Cysteine 174 is an active-site residue. Residues serine 281 and 318–321 (GGRA) contribute to the CoA site.

This sequence belongs to the thiolase-like superfamily. Chalcone/stilbene synthases family. As to quaternary structure, homodimer.

It participates in secondary metabolite biosynthesis; flavonoid biosynthesis. Catalyzes the iterative condensations of 8 molecules of malonyl-CoA to produce aromatic octaketides, SEK4 and SEK4b, the products of the minimal polyketide synthase for the benzoisochromanequinone actinorhodin. May be involved in the biosynthesis of the octaketide barbaloin. This is Octaketide synthase 1 from Aloe arborescens (Kidachi aloe).